The chain runs to 315 residues: Aspartate carbamoyltransferase catalytic subunit (315 aa).

Carbamoyl phosphate-binding residues include R64 and T65. K93 contributes to the L-aspartate binding site. 3 residues coordinate carbamoyl phosphate: R114, H142, and Q145. Residues R175 and R237 each contribute to the L-aspartate site. Carbamoyl phosphate contacts are provided by L276 and P277.

It belongs to the aspartate/ornithine carbamoyltransferase superfamily. ATCase family. In terms of assembly, heterooligomer of catalytic and regulatory chains.

It carries out the reaction carbamoyl phosphate + L-aspartate = N-carbamoyl-L-aspartate + phosphate + H(+). It participates in pyrimidine metabolism; UMP biosynthesis via de novo pathway; (S)-dihydroorotate from bicarbonate: step 2/3. Functionally, catalyzes the condensation of carbamoyl phosphate and aspartate to form carbamoyl aspartate and inorganic phosphate, the committed step in the de novo pyrimidine nucleotide biosynthesis pathway. In Thermofilum pendens (strain DSM 2475 / Hrk 5), this protein is Aspartate carbamoyltransferase catalytic subunit.